The chain runs to 741 residues: MEHTYQYAWIIPFVPLPVTMSIGLGLLLVPTATKNLRRMWAFPSVSLLSIVMVFSADLSIQQINGSSIYQYLCSWTINNDFSLEFGHLIDPLTSIMSILITTVGIMVLIYSDNYMSHDQGYLRFFAYMSFSNTSMLGLVTSSNLIQIHIFWELVGMCSYLLIGFWFTRPIAANACQKAFVTNRVGDFGLLLGILGFYWITGSLEFRDLFEIFNNLIHTNGVNSLFATLCAFLLFVGAVAKSAQFPLHVWLPDAMEGPTPISALIHAATMVAAGIFLVARLLPIFTVIPYIMNLISLLGIITVLLGATLALAQKDIKRSLAYSTMSQLGYTMLAPGIGSYRAALFHLITHAYSKALLFLGSGSIIHSMEPIVGYSPDKSQNMVLMGGLTKYVPITKTTFLLGTLSLCGIPPLACFWSKDEILNDSWLYSPIFAIIACSTAGLTAFYMFRMYLLTFEGHLHIRFQNYSGTKNSSFCSISIWGKEGPEPVKKKLLLSVMNNNQKVSFFSKKIYQIDGNVRNLMRSFSTHFDNKDTSMYPCESDNTMLFPLLVLVLFTLFVGSIGIPFDQVGSDFDILSKWLTPSINLLHQNSNYSVDWYEFVTNAIYSVSISYFGIFIASLLYGSVYSSFQNLDLINSFVKIGPKRLFLDRIINVIYNWSYNRGYIDVFYATFLTKGIRGLAELTNFFDRRVIDGITNGVGIASFFVGEGIKYVGGGRISSYLFVYLSYVSTFLLIYYFYFLNR.

14 consecutive transmembrane segments (helical) span residues 9–29 (WIIP…LLLV), 40–60 (WAFP…DLSI), 89–109 (IDPL…MVLI), 122–139 (LRFF…LGLV), 147–167 (IHIF…FWFT), 185–205 (GDFG…SLEF), 219–239 (NGVN…GAVA), 258–278 (TPIS…FLVA), 280–300 (LLPI…LGII), 396–416 (TTFL…CFWS), 425–445 (WLYS…TAFY), 544–564 (LFPL…GIPF), 603–623 (IYSV…YGSV), and 719–739 (YLFV…FYFL).

This sequence belongs to the complex I subunit 5 family. As to quaternary structure, NDH is composed of at least 16 different subunits, 5 of which are encoded in the nucleus.

It localises to the plastid. The protein localises to the chloroplast thylakoid membrane. It carries out the reaction a plastoquinone + NADH + (n+1) H(+)(in) = a plastoquinol + NAD(+) + n H(+)(out). The enzyme catalyses a plastoquinone + NADPH + (n+1) H(+)(in) = a plastoquinol + NADP(+) + n H(+)(out). Its function is as follows. NDH shuttles electrons from NAD(P)H:plastoquinone, via FMN and iron-sulfur (Fe-S) centers, to quinones in the photosynthetic chain and possibly in a chloroplast respiratory chain. The immediate electron acceptor for the enzyme in this species is believed to be plastoquinone. Couples the redox reaction to proton translocation, and thus conserves the redox energy in a proton gradient. In Liriodendron tulipifera (Tuliptree), this protein is NAD(P)H-quinone oxidoreductase subunit 5, chloroplastic (ndhF).